The chain runs to 403 residues: Soluble calcium-activated nucleotidase 1 (403 aa).

At 1–44 (MPIQPFDQREWNEPMHSLRISVGGLPVLASMTKATDPRFRPRWR) the chain is on the cytoplasmic side. Residues 45 to 61 (VILTSFVGAALLWLLYS) traverse the membrane as a helical; Signal-anchor for type II membrane protein segment. The Lumenal segment spans residues 62-403 (HHQGPVPGRP…TVKYEGIEFI (342 aa)). An N-linked (GlcNAc...) asparagine glycan is attached at Asn90. Residues Ser170, Asp171, Glu217, Glu286, Ser347, and Glu398 each coordinate Ca(2+).

This sequence belongs to the apyrase family. As to quaternary structure, monomer. Homodimer; dimerization is Ca(2+)-dependent. It depends on Ca(2+) as a cofactor.

It localises to the endoplasmic reticulum membrane. Its subcellular location is the golgi apparatus. The protein resides in the golgi stack membrane. It catalyses the reaction a ribonucleoside 5'-diphosphate + H2O = a ribonucleoside 5'-phosphate + phosphate + H(+). Calcium-dependent nucleotidase with a preference for UDP. The order of activity with different substrates is UDP &gt; GDP &gt; IDP &gt;&gt; UTP &gt; CDP = GTP = ITP. Has very low activity towards ADP and even lower activity towards ATP. Does not hydrolyze AMP and GMP. Involved in proteoglycan synthesis. The sequence is that of Soluble calcium-activated nucleotidase 1 (Cant1) from Mus musculus (Mouse).